The sequence spans 81 residues: MKTLLLTLVVVTIVCLDLGYTLKCNKLIPIASKTCPAGKNLCYKMFMMSDLTIPVKRGCIDVCPKNSLLVKYVCCNTDRCN.

The N-terminal stretch at 1-21 (MKTLLLTLVVVTIVCLDLGYT) is a signal peptide. Cystine bridges form between Cys-24/Cys-42, Cys-35/Cys-59, Cys-63/Cys-74, and Cys-75/Cys-80.

The protein belongs to the three-finger toxin family. Short-chain subfamily. Type IA cytotoxin sub-subfamily. Monomer in solution; Homodimer and oligomer in the presence of negatively charged lipids forming a pore with a size ranging between 20 and 30 Angstroms. In terms of tissue distribution, expressed by the venom gland.

The protein resides in the secreted. It is found in the target cell membrane. In terms of biological role, basic protein that binds to cell membrane and depolarizes cardiomyocytes. It also shows lytic activities on many other cells, including red blood cells. Interaction with sulfatides in the cell membrane induces pore formation and cell internalization and is responsible for cytotoxicity in cardiomyocytes. It targets the mitochondrial membrane and induces mitochondrial swelling and fragmentation. It binds to the integrin alpha-V/beta-3 (ITGAV/ITGB3) with a moderate affinity and inhibits protein kinases C. It also binds with high affinity to heparin. It also causes skeletal muscle necrosis after intramuscular injection into mice. The chain is Cytotoxin 1 from Naja atra (Chinese cobra).